Reading from the N-terminus, the 34-residue chain is Photosystem I reaction center subunit XII (34 aa).

Residues 10–32 (IFIALVVAAHAGVLAVRLCVSLY) traverse the membrane as a helical segment.

This sequence belongs to the PsaM family.

It is found in the cellular thylakoid membrane. This is Photosystem I reaction center subunit XII from Synechococcus sp. (strain WH7803).